Reading from the N-terminus, the 228-residue chain is Prolactin (228 aa).

A signal peptide spans 1–29 (MGTKRSSLKGSLLLLLLMSSLFLFKSVES). Cysteine 33 and cysteine 40 are joined by a disulfide. 3 positions are modified to phosphoserine: serine 55, serine 63, and serine 119. Cystine bridges form between cysteine 87–cysteine 203 and cysteine 220–cysteine 228.

This sequence belongs to the somatotropin/prolactin family. As to quaternary structure, interacts with PRLR.

The protein resides in the secreted. Its function is as follows. Prolactin acts primarily on the mammary gland by promoting lactation, mammogenesis, mitogenesis and osmoregulation. In Trichosurus vulpecula (Brush-tailed possum), this protein is Prolactin (PRL).